Here is a 294-residue protein sequence, read N- to C-terminus: 4-diphosphocytidyl-2-C-methyl-D-erythritol kinase (294 aa).

Lys-16 is an active-site residue. 99-109 (PMGAGLGGGSS) is an ATP binding site. Asp-141 is an active-site residue.

The protein belongs to the GHMP kinase family. IspE subfamily.

The enzyme catalyses 4-CDP-2-C-methyl-D-erythritol + ATP = 4-CDP-2-C-methyl-D-erythritol 2-phosphate + ADP + H(+). Its pathway is isoprenoid biosynthesis; isopentenyl diphosphate biosynthesis via DXP pathway; isopentenyl diphosphate from 1-deoxy-D-xylulose 5-phosphate: step 3/6. Functionally, catalyzes the phosphorylation of the position 2 hydroxy group of 4-diphosphocytidyl-2C-methyl-D-erythritol. The polypeptide is 4-diphosphocytidyl-2-C-methyl-D-erythritol kinase (Polynucleobacter asymbioticus (strain DSM 18221 / CIP 109841 / QLW-P1DMWA-1) (Polynucleobacter necessarius subsp. asymbioticus)).